A 395-amino-acid chain; its full sequence is ASTRA-associated protein 1 (395 aa).

WD repeat units lie at residues 7–48 (AHVS…PIAS), 221–260 (HYPE…LPVV), and 343–386 (INPG…TGYN).

The protein belongs to the WD repeat ASA1 family. Component of the ASTRA chromatin remodeling machinery complex.

Its subcellular location is the nucleus. Functionally, component of the ASTRA complex involved in chromatin remodeling. The chain is ASTRA-associated protein 1 (ASA1) from Eremothecium gossypii (strain ATCC 10895 / CBS 109.51 / FGSC 9923 / NRRL Y-1056) (Yeast).